The sequence spans 372 residues: Ciliary neurotrophic factor receptor subunit alpha (372 aa).

The signal sequence occupies residues 1–22 (MAAPVPWACCAVLAAAAAVVYA). In terms of domain architecture, Ig-like C2-type spans 27–104 (PQEAPHVQYE…WHLRHQVLLH (78 aa)). Cysteine 46 and cysteine 89 are oxidised to a cystine. 4 N-linked (GlcNAc...) asparagine glycosylation sites follow: asparagine 60, asparagine 70, asparagine 142, and asparagine 190. Fibronectin type-III domains are found at residues 108–205 (PPRE…VKPD) and 206–306 (PPEN…TEEP). Residues 290 to 294 (WSDWS) carry the WSXWS motif motif. The tract at residues 301–340 (PWTEEPRHLTTEAQAAETTTSTTSSLAPPPTTKICDPGEL) is disordered. Residues 311-326 (TEAQAAETTTSTTSSL) are compositionally biased toward low complexity. Serine 342 is lipidated: GPI-anchor amidated serine. Residues 343–372 (GGGPSAPFLVSVPITLALAAAAATASSLLI) constitute a propeptide, removed in mature form.

The protein belongs to the type I cytokine receptor family. Type 3 subfamily. Forms a heterotrimer with LIFR and IL6ST. Interacts with heterodimeric neurotropic cytokine composed of CLCF1/CLC and CRLF1/CLF-1. Either alone or in complex with the heterodimer CLCF1-CRLF1 interacts with SORL1; this interaction may promote internalization and lysosomal degradation. Component of a receptor complex composed of IL6ST/GP130, IL27RA/WSX1 and CNTFR which interacts with the neuroprotective peptide humanin. In terms of tissue distribution, nervous system and skeletal muscle.

It is found in the cell membrane. Its function is as follows. Binds to CNTF. The alpha subunit provides the receptor specificity. Receptor for heterodimeric neurotropic cytokine composed of CLCF1/CLC and CRLF1/CLF-1. Acts as a receptor for the neuroprotective peptide humanin as part of a complex with IL6ST/GP130 and IL27RA/WSX1. In Homo sapiens (Human), this protein is Ciliary neurotrophic factor receptor subunit alpha (CNTFR).